We begin with the raw amino-acid sequence, 65 residues long: Large ribosomal subunit protein uL29 (65 aa).

This sequence belongs to the universal ribosomal protein uL29 family.

In Brevibacillus brevis (strain 47 / JCM 6285 / NBRC 100599), this protein is Large ribosomal subunit protein uL29.